The chain runs to 440 residues: Xaa-Pro dipeptidase (440 aa).

Asp241, Asp252, His333, Glu378, and Glu417 together coordinate Mn(2+).

The protein belongs to the peptidase M24B family. Bacterial-type prolidase subfamily. Mn(2+) serves as cofactor.

It carries out the reaction Xaa-L-Pro dipeptide + H2O = an L-alpha-amino acid + L-proline. Functionally, splits dipeptides with a prolyl residue in the C-terminal position. The protein is Xaa-Pro dipeptidase of Glaesserella parasuis serovar 5 (strain SH0165) (Haemophilus parasuis).